A 425-amino-acid chain; its full sequence is Pyruvate dehydrogenase E1 component subunit alpha-3, chloroplastic (425 aa).

The transit peptide at 1–66 (MAAASSFTAA…VLPGNKAAPA (66 aa)) directs the protein to the chloroplast. Pyruvate contacts are provided by histidine 109, tyrosine 135, arginine 136, alanine 184, isoleucine 186, aspartate 224, glycine 225, and asparagine 253. 8 residues coordinate thiamine diphosphate: tyrosine 135, arginine 136, alanine 184, isoleucine 186, aspartate 224, glycine 225, asparagine 253, and histidine 322. Aspartate 224 provides a ligand contact to Mg(2+). Asparagine 253 is a Mg(2+) binding site.

Tetramer of 2 alpha and 2 beta subunits. Thiamine diphosphate is required as a cofactor. The cofactor is Mg(2+).

The protein localises to the plastid. Its subcellular location is the chloroplast. The catalysed reaction is N(6)-[(R)-lipoyl]-L-lysyl-[protein] + pyruvate + H(+) = N(6)-[(R)-S(8)-acetyldihydrolipoyl]-L-lysyl-[protein] + CO2. Functionally, the pyruvate dehydrogenase complex catalyzes the overall conversion of pyruvate to acetyl-CoA and CO(2). It contains multiple copies of three enzymatic components: pyruvate dehydrogenase (E1), dihydrolipoamide acetyltransferase (E2) and lipoamide dehydrogenase (E3). In Oryza sativa subsp. japonica (Rice), this protein is Pyruvate dehydrogenase E1 component subunit alpha-3, chloroplastic.